The chain runs to 395 residues: Elongation factor Tu (395 aa).

The 195-residue stretch at 10-204 (KTHANIGTIG…AVDSYIPTPE (195 aa)) folds into the tr-type G domain. Residues 19–26 (GHVDHGKT) form a G1 region. 19 to 26 (GHVDHGKT) contacts GTP. Thr-26 provides a ligand contact to Mg(2+). The interval 60–64 (GITIN) is G2. The G3 stretch occupies residues 81-84 (DCPG). GTP contacts are provided by residues 81–85 (DCPGH) and 136–139 (NKCD). Positions 136–139 (NKCD) are G4. The interval 174 to 176 (SAL) is G5.

Belongs to the TRAFAC class translation factor GTPase superfamily. Classic translation factor GTPase family. EF-Tu/EF-1A subfamily. As to quaternary structure, monomer.

The protein localises to the cytoplasm. It catalyses the reaction GTP + H2O = GDP + phosphate + H(+). GTP hydrolase that promotes the GTP-dependent binding of aminoacyl-tRNA to the A-site of ribosomes during protein biosynthesis. The sequence is that of Elongation factor Tu from Lysinibacillus sphaericus (strain C3-41).